A 472-amino-acid chain; its full sequence is PEP-dependent dihydroxyacetone kinase, phosphoryl donor subunit DhaM (472 aa).

The 135-residue stretch at 1-135 folds into the PTS EIIA type-4 domain; the sequence is MVNLVIVSHS…HALEAKREQL (135 aa). Residue histidine 9 is the Tele-phosphohistidine intermediate of the active site. One can recognise an HPr domain in the interval 155–242; sequence ARSLAVVIKN…QLAEDNFGET (88 aa). The active-site Pros-phosphohistidine intermediate is histidine 169. The segment at 264–472 is PTS EI-like, N-terminal part; sequence QPVLCTVQAK…VKTQRFNRQG (209 aa). The active-site Tele-phosphohistidine intermediate is the histidine 430.

Belongs to the PEP-utilizing enzyme family. In terms of assembly, homodimer. The dihydroxyacetone kinase complex is composed of a homodimer of DhaM, a homodimer of DhaK and the subunit DhaL.

It catalyses the reaction dihydroxyacetone + phosphoenolpyruvate = dihydroxyacetone phosphate + pyruvate. It functions in the pathway polyol metabolism; glycerol degradation. In terms of biological role, component of the dihydroxyacetone kinase complex, which is responsible for the phosphoenolpyruvate (PEP)-dependent phosphorylation of dihydroxyacetone. DhaM serves as the phosphoryl donor. Is phosphorylated by phosphoenolpyruvate in an EI- and HPr-dependent reaction, and a phosphorelay system on histidine residues finally leads to phosphoryl transfer to DhaL and dihydroxyacetone. This Escherichia coli (strain K12) protein is PEP-dependent dihydroxyacetone kinase, phosphoryl donor subunit DhaM.